Consider the following 268-residue polypeptide: Satratoxin biosynthesis SC1 cluster protein 4 (268 aa).

A run of 4 helical transmembrane segments spans residues 34-54 (VWLVGIVQGCWGIAILLVHIF), 78-98 (LFAIYEALNSVLDFIVAGLAI), 113-133 (HLAGLFVLGAFSGFIGIIKIV), and 145-165 (AVIWNVVQMSISIICCCAPIY).

It belongs to the SAT4 family.

It localises to the membrane. The protein operates within mycotoxin biosynthesis. Its function is as follows. Part of the satratoxin SC1 cluster involved in the biosynthesis of satratoxins, trichothecene mycotoxins that are associated with human food poisonings. Satratoxins are suggested to be made by products of multiple gene clusters (SC1, SC2 and SC3) that encode 21 proteins in all, including polyketide synthases, acetyltransferases, and other enzymes expected to modify the trichothecene skeleton. SC1 encodes 10 proteins, SAT1 to SAT10. The largest are SAT8, which encodes a putative polyketide synthase (PKS) with a conventional non-reducing architecture, and SAT10, a putative protein containing four ankyrin repeats and thus may be involved in protein scaffolding. The putative short-chain reductase SAT3 may assist the PKS in some capacity. SAT6 contains a secretory lipase domain and acts probably as a trichothecene esterase. SAT5 encodes a putative acetyltransferase, and so, with SAT6, may affect endogenous protection from toxicity. The probable transcription factor SAT9 may regulate the expression of the SC1 cluster. SC2 encodes proteins SAT11 to SAT16, the largest of which encodes the putative reducing PKS SAT13. SAT11 is a cytochrome P450 monooxygenase, while SAT14 and SAT16 are probable acetyltransferases. The SC2 cluster may be regulated by the transcription factor SAT15. SC3 is a small cluster that encodes 5 proteins, SAT17 to SAT21. SAT21 is a putative MFS-type transporter which may have a role in exporting secondary metabolites. The four other proteins putatively encoded in SC3 include the taurine hydroxylase-like protein SAT17, the O-methyltransferase SAT18, the acetyltransferase SAT19, and the Cys6-type zinc finger SAT20, the latter being probably involved in regulation of SC3 expression. The sequence is that of Satratoxin biosynthesis SC1 cluster protein 4 from Stachybotrys chartarum (strain CBS 109288 / IBT 7711) (Toxic black mold).